The primary structure comprises 364 residues: DNA replication and repair protein RecF (364 aa).

30 to 37 (GNNAQGKT) contributes to the ATP binding site.

Belongs to the RecF family.

The protein resides in the cytoplasm. In terms of biological role, the RecF protein is involved in DNA metabolism; it is required for DNA replication and normal SOS inducibility. RecF binds preferentially to single-stranded, linear DNA. It also seems to bind ATP. In Clostridium botulinum (strain ATCC 19397 / Type A), this protein is DNA replication and repair protein RecF.